Here is a 147-residue protein sequence, read N- to C-terminus: Small ribosomal subunit protein uS12 (147 aa).

Belongs to the universal ribosomal protein uS12 family. Part of the 30S ribosomal subunit.

With S4 and S5 plays an important role in translational accuracy. Located at the interface of the 30S and 50S subunits. The chain is Small ribosomal subunit protein uS12 from Pyrococcus horikoshii (strain ATCC 700860 / DSM 12428 / JCM 9974 / NBRC 100139 / OT-3).